Here is a 598-residue protein sequence, read N- to C-terminus: Arginine--tRNA ligase (598 aa).

The short motif at Ala-139 to His-149 is the 'HIGH' region element.

Belongs to the class-I aminoacyl-tRNA synthetase family. As to quaternary structure, monomer.

It is found in the cytoplasm. The enzyme catalyses tRNA(Arg) + L-arginine + ATP = L-arginyl-tRNA(Arg) + AMP + diphosphate. The polypeptide is Arginine--tRNA ligase (Bradyrhizobium sp. (strain ORS 278)).